The following is a 560-amino-acid chain: Arginine--tRNA ligase (560 aa).

The 'HIGH' region signature appears at 121-131; that stretch reads PNIAKPFSMGH.

This sequence belongs to the class-I aminoacyl-tRNA synthetase family. In terms of assembly, monomer.

It is found in the cytoplasm. It carries out the reaction tRNA(Arg) + L-arginine + ATP = L-arginyl-tRNA(Arg) + AMP + diphosphate. This chain is Arginine--tRNA ligase, found in Exiguobacterium sibiricum (strain DSM 17290 / CCUG 55495 / CIP 109462 / JCM 13490 / 255-15).